The primary structure comprises 124 residues: uncharacterized protein (124 aa).

The span at Lys-62–His-72 shows a compositional bias: basic residues. The disordered stretch occupies residues Lys-62 to Ser-86. A compositionally biased stretch (basic and acidic residues) spans His-73–Val-83. Residues Glu-80–Glu-112 adopt a coiled-coil conformation.

This is an uncharacterized protein from Dictyostelium discoideum (Social amoeba).